The primary structure comprises 212 residues: Pyridoxine/pyridoxamine 5'-phosphate oxidase (212 aa).

Substrate contacts are provided by residues 8–11 and Lys-66; that span reads RREY. FMN-binding positions include 61–66, 76–77, Arg-82, Lys-83, and Gln-105; these read RIVLLK and FT. Substrate is bound by residues Tyr-123, Arg-127, and Ser-131. FMN-binding positions include 140–141 and Trp-185; that span reads QS. 191–193 is a substrate binding site; the sequence is RLH. Arg-195 contributes to the FMN binding site.

This sequence belongs to the pyridoxamine 5'-phosphate oxidase family. As to quaternary structure, homodimer. It depends on FMN as a cofactor.

The catalysed reaction is pyridoxamine 5'-phosphate + O2 + H2O = pyridoxal 5'-phosphate + H2O2 + NH4(+). The enzyme catalyses pyridoxine 5'-phosphate + O2 = pyridoxal 5'-phosphate + H2O2. The protein operates within cofactor metabolism; pyridoxal 5'-phosphate salvage; pyridoxal 5'-phosphate from pyridoxamine 5'-phosphate: step 1/1. It functions in the pathway cofactor metabolism; pyridoxal 5'-phosphate salvage; pyridoxal 5'-phosphate from pyridoxine 5'-phosphate: step 1/1. In terms of biological role, catalyzes the oxidation of either pyridoxine 5'-phosphate (PNP) or pyridoxamine 5'-phosphate (PMP) into pyridoxal 5'-phosphate (PLP). The protein is Pyridoxine/pyridoxamine 5'-phosphate oxidase of Shewanella frigidimarina (strain NCIMB 400).